Here is a 432-residue protein sequence, read N- to C-terminus: Transcription factor E2F1 (432 aa).

Disordered regions lie at residues 39–85 (DVGA…GRPP) and 98–126 (YLAGSSGPFRGRGRHPGKGVKSPGEKSRY). The tract at residues 65–106 (ATPQAPRPAPSAPRPALGRPPVKRRLDLETDHQYLAGSSGPF) is cyclin A:CDK2 binding. The interaction with BIRC2/c-IAP1 stretch occupies residues 87-189 (KRRLDLETDH…KKSKNHIQWL (103 aa)). A DNA-binding region spans residues 108–192 (GRGRHPGKGV…KNHIQWLGSR (85 aa)). K115, K118, and K123 each carry N6-acetyllysine. The leucine-zipper stretch occupies residues 151–172 (LNWAAEVLKVQKRRIYDITNVL). The DEF box motif lies at 156 to 192 (EVLKVQKRRIYDITNVLEGIQLIAKKSKNHIQWLGSR). K183 is subject to N6-methyllysine; by SETD7. The interval 190–377 (GSRTMVGIGQ…RLSPLVAADS (188 aa)) is required for interaction with TRIM28. A dimerization region spans residues 193–282 (TMVGIGQRLE…AVDSAETFQI (90 aa)). Positions 297–342 (PEESAEGISPGRTSYQETSGEDRNADSGTAGPPPSPPSTSPTLDPS) are disordered. Residues 363-432 (PMEEDRLSPL…DFGDLTPLDF (70 aa)) are transactivation. A phosphoserine mark is found at S370 and S398. The interval 404 to 421 (VDYHFGLEEGEGIRDLFD) is RB1 binding. Phosphothreonine is present on T428.

The protein belongs to the E2F/DP family. Component of the DRTF1/E2F transcription factor complex. Forms heterodimers with DP family members. The E2F1 complex binds specifically hypophosphorylated RB1, the interaction represses E2F1-driven transcription. During the cell cycle, RB1 becomes phosphorylated in mid-to-late G1 phase, detaches from the DRTF1/E2F complex, rendering E2F transcriptionally active. Interacts with TRRAP, which probably mediates its interaction with histone acetyltransferase complexes, leading to transcription activation. Binds TOPBP1 and EAPP. Interacts with ARID3A. Interacts with TRIM28; the interaction inhibits E2F1 acetylation through recruiting HDAC1 and represses its transcriptional activity. Interaction with KAT2B; the interaction acetylates E2F1 enhancing its DNA-binding and transcriptional activity. Interacts with BIRC2/c-IAP1 (via BIR domains). The complex TFDP1:E2F1 interacts with CEBPA; the interaction prevents CEBPA binding to target genes promoters and represses its transcriptional activity. Interacts with RRP1B. Interacts with HCFC1. Interacts with KMT2E; the interaction is probably indirect and is mediated via HCFC1. Interacts with DCAF5 and L3MBTL3; the interaction requires methylation at Lys-183 and is necessary to target E2F1 for ubiquitination by the CRL4-DCAF5 E3 ubiquitin ligase complex. In terms of processing, phosphorylated by CDK2 and cyclin A-CDK2 in the S-phase. Phosphorylation by CHEK2 stabilizes E2F1 upon DNA damage and regulates its effect on transcription and apoptosis. Phosphorylation at Ser-398 by GSK3B promotes interaction with USP11, leading to its deubiquitination and stabilization. Ubiquitinated via 'Lys-63'-linked ubiquitin, leading to its degradation. Deubiquitinated by USP11 following phosphorylation by GSK3B, promoting its stability. Post-translationally, acetylation stimulates DNA-binding. Enhanced under stress conditions such as DNA damage and inhibited by retinoblastoma protein RB1. Regulated by KAP1/TRIM28 which recruits HDAC1 to E2F1 resulting in deacetylation. In terms of processing, methylation at Lys-183 by SETD7 promotes E2F1 ubiquitin-dependent proteasomal degradation.

It localises to the nucleus. BIRC2/c-IAP1 stimulates its transcriptional activity. In terms of biological role, transcription activator that binds DNA cooperatively with DP proteins through the E2 recognition site, 5'-TTTC[CG]CGC-3' found in the promoter region of a number of genes whose products are involved in cell cycle regulation or in DNA replication. The DRTF1/E2F complex functions in the control of cell-cycle progression from G1 to S phase. E2F1 binds preferentially RB1 in a cell-cycle dependent manner. It can mediate both cell proliferation and TP53/p53-dependent apoptosis. Blocks adipocyte differentiation by binding to specific promoters repressing CEBPA binding to its target gene promoters. Directly activates transcription of PEG10. Positively regulates transcription of RRP1B. This chain is Transcription factor E2F1, found in Rattus norvegicus (Rat).